The chain runs to 562 residues: NAD-dependent malic enzyme (562 aa).

Tyr-101 (proton donor) is an active-site residue. Arg-154 contributes to the NAD(+) binding site. Lys-172 functions as the Proton acceptor in the catalytic mechanism. A divalent metal cation contacts are provided by Glu-243, Asp-244, and Asp-267. Positions 267 and 415 each coordinate NAD(+).

The protein belongs to the malic enzymes family. As to quaternary structure, homotetramer. The cofactor is Mg(2+). Mn(2+) serves as cofactor.

The enzyme catalyses (S)-malate + NAD(+) = pyruvate + CO2 + NADH. The catalysed reaction is oxaloacetate + H(+) = pyruvate + CO2. The protein is NAD-dependent malic enzyme of Shewanella oneidensis (strain ATCC 700550 / JCM 31522 / CIP 106686 / LMG 19005 / NCIMB 14063 / MR-1).